A 459-amino-acid chain; its full sequence is MLREYKTVREIVGPLMLVEKVEGVKYNELVEIETGSGEIRRGQVLEVNGDKALVQLFEGSTGLNINDCKVRFVGKSIELGVSIDMLGRVFDGLGRPRDKGPMIIPEKRLDINGNPINPTARDYPSEFIQTGISAIDGLNTLVRGQKLPIFSGSGLPHAQLAAQIARQAKVLGTDSKFAVVFAAMGITFEEADYFISDFRRTGAIDRTVLFINLANDPAIERIATPRMALTCAEFLAYEKEMHVLVIMTDMTNYCEALREVSAARKEVPGRRGYPGYLYTDLATIYERAGRIKGRKGSITQIPILTMPEDDKTHPIPDLTGYITEGQIILSRDLYRKGIYPPIDVLPSLSRLKDKGIGQGKTREDHADLMNQLFASYARGKQAKELAVILGEAALSDTDKLYAKFADEFEARYVAQREDEDRSIEETLAIGWDLLTILPRAELKRVRDEYIDKYLPEKGE.

Belongs to the ATPase alpha/beta chains family.

Functionally, produces ATP from ADP in the presence of a proton gradient across the membrane. The V-type beta chain is a regulatory subunit. This Thermoanaerobacter sp. (strain X514) protein is V-type ATP synthase beta chain.